Reading from the N-terminus, the 366-residue chain is Chorismate synthase (366 aa).

Residues R48 and R54 each contribute to the NADP(+) site. FMN contacts are provided by residues 125–127, 238–239, G278, 293–297, and R319; these read RSS, NA, and KPTSS.

Belongs to the chorismate synthase family. As to quaternary structure, homotetramer. Requires FMNH2 as cofactor.

The catalysed reaction is 5-O-(1-carboxyvinyl)-3-phosphoshikimate = chorismate + phosphate. It functions in the pathway metabolic intermediate biosynthesis; chorismate biosynthesis; chorismate from D-erythrose 4-phosphate and phosphoenolpyruvate: step 7/7. Catalyzes the anti-1,4-elimination of the C-3 phosphate and the C-6 proR hydrogen from 5-enolpyruvylshikimate-3-phosphate (EPSP) to yield chorismate, which is the branch point compound that serves as the starting substrate for the three terminal pathways of aromatic amino acid biosynthesis. This reaction introduces a second double bond into the aromatic ring system. The polypeptide is Chorismate synthase (Ralstonia nicotianae (strain ATCC BAA-1114 / GMI1000) (Ralstonia solanacearum)).